A 92-amino-acid chain; its full sequence is Small ribosomal subunit protein uS19 (92 aa).

This sequence belongs to the universal ribosomal protein uS19 family.

In terms of biological role, protein S19 forms a complex with S13 that binds strongly to the 16S ribosomal RNA. This chain is Small ribosomal subunit protein uS19, found in Chelativorans sp. (strain BNC1).